We begin with the raw amino-acid sequence, 81 residues long: Omega-conotoxin-like TxMKLT1-0223 (81 aa).

The signal sequence occupies residues 1–22 (MKLTCMMIVAVLFLTAWTFVTA). Residues 23-52 (VPHSSNALENLYLKARHEMENPEASKLNTR) constitute a propeptide that is removed on maturation. Intrachain disulfides connect Cys-55–Cys-72, Cys-62–Cys-76, and Cys-71–Cys-80.

The protein belongs to the conotoxin O1 superfamily. In terms of tissue distribution, expressed by the venom duct.

It localises to the secreted. Its function is as follows. Omega-conotoxins act at presynaptic membranes, they bind and block voltage-gated calcium channels (Cav). In Conus textile (Cloth-of-gold cone), this protein is Omega-conotoxin-like TxMKLT1-0223.